We begin with the raw amino-acid sequence, 89 residues long: MCNILIPSNMKTGIKKVKLHVKKNDTVTVISGNDKGKMGKVLKVFPVASRVIVEGVNIRKRHMRPLQGQTQGRIIEREFPIHSSNVKKS.

Belongs to the universal ribosomal protein uL24 family. As to quaternary structure, part of the 50S ribosomal subunit.

In terms of biological role, one of two assembly initiator proteins, it binds directly to the 5'-end of the 23S rRNA, where it nucleates assembly of the 50S subunit. One of the proteins that surrounds the polypeptide exit tunnel on the outside of the subunit. This chain is Large ribosomal subunit protein uL24, found in Chlorobium chlorochromatii (strain CaD3).